The sequence spans 73 residues: DNA-directed RNA polymerase subunit omega (73 aa).

This sequence belongs to the RNA polymerase subunit omega family. In terms of assembly, in cyanobacteria the RNAP catalytic core is composed of 2 alpha, 1 beta, 1 beta', 1 gamma and 1 omega subunit. When a sigma factor is associated with the core the holoenzyme is formed, which can initiate transcription.

It catalyses the reaction RNA(n) + a ribonucleoside 5'-triphosphate = RNA(n+1) + diphosphate. Functionally, promotes RNA polymerase assembly. Latches the N- and C-terminal regions of the beta' subunit thereby facilitating its interaction with the beta and alpha subunits. The sequence is that of DNA-directed RNA polymerase subunit omega from Gloeobacter violaceus (strain ATCC 29082 / PCC 7421).